Consider the following 374-residue polypeptide: Large ribosomal subunit protein uL4 (374 aa).

Residues 336–355 (EKAMAKGMQNKKNREARHAA) are disordered.

This sequence belongs to the universal ribosomal protein uL4 family.

This is Large ribosomal subunit protein uL4 (RPL4) from Trypanosoma brucei brucei.